The sequence spans 228 residues: Thermonuclease (228 aa).

An N-terminal signal peptide occupies residues 1-23 (MTEYLLSAGICMAIVSILLIGMA). A propeptide spanning residues 24-60 (ISNVSKGQYAKRFFFFATSCLVLTLVVVSSLSSSANA) is cleaved from the precursor. The segment covering 58–70 (ANASQTDNGVNRS) has biased composition (polar residues). The tract at residues 58–83 (ANASQTDNGVNRSGSEDPTVYSATST) is disordered. Asp100 contributes to the Ca(2+) binding site. Arg114 is a catalytic residue. Ca(2+) is bound by residues Asp119 and Thr120. Catalysis depends on residues Glu122 and Arg166.

The protein belongs to the thermonuclease family. It depends on Ca(2+) as a cofactor.

The protein resides in the secreted. It carries out the reaction Endonucleolytic cleavage to nucleoside 3'-phosphates and 3'-phosphooligonucleotide end-products.. Enzyme that catalyzes the hydrolysis of both DNA and RNA at the 5' position of the phosphodiester bond. The protein is Thermonuclease (nuc) of Staphylococcus aureus (strain Mu50 / ATCC 700699).